We begin with the raw amino-acid sequence, 252 residues long: 5'-nucleotidase SurE (252 aa).

A divalent metal cation-binding residues include Asp8, Asp9, Ser42, and Asn94.

It belongs to the SurE nucleotidase family. Requires a divalent metal cation as cofactor.

It is found in the cytoplasm. The catalysed reaction is a ribonucleoside 5'-phosphate + H2O = a ribonucleoside + phosphate. Nucleotidase that shows phosphatase activity on nucleoside 5'-monophosphates. The sequence is that of 5'-nucleotidase SurE from Ehrlichia ruminantium (strain Gardel).